A 162-amino-acid polypeptide reads, in one-letter code: Crossover junction endodeoxyribonuclease RuvC (162 aa).

Catalysis depends on residues Asp-8, Glu-69, and His-141. Asp-8, Glu-69, and His-141 together coordinate Mg(2+).

Belongs to the RuvC family. As to quaternary structure, homodimer which binds Holliday junction (HJ) DNA. The HJ becomes 2-fold symmetrical on binding to RuvC with unstacked arms; it has a different conformation from HJ DNA in complex with RuvA. In the full resolvosome a probable DNA-RuvA(4)-RuvB(12)-RuvC(2) complex forms which resolves the HJ. The cofactor is Mg(2+).

Its subcellular location is the cytoplasm. It carries out the reaction Endonucleolytic cleavage at a junction such as a reciprocal single-stranded crossover between two homologous DNA duplexes (Holliday junction).. In terms of biological role, the RuvA-RuvB-RuvC complex processes Holliday junction (HJ) DNA during genetic recombination and DNA repair. Endonuclease that resolves HJ intermediates. Cleaves cruciform DNA by making single-stranded nicks across the HJ at symmetrical positions within the homologous arms, yielding a 5'-phosphate and a 3'-hydroxyl group; requires a central core of homology in the junction. The consensus cleavage sequence is 5'-(A/T)TT(C/G)-3'. Cleavage occurs on the 3'-side of the TT dinucleotide at the point of strand exchange. HJ branch migration catalyzed by RuvA-RuvB allows RuvC to scan DNA until it finds its consensus sequence, where it cleaves and resolves the cruciform DNA. The sequence is that of Crossover junction endodeoxyribonuclease RuvC from Wolbachia pipientis wMel.